Consider the following 686-residue polypeptide: Band 4.1-like protein 4A (686 aa).

The 289-residue stretch at 11 to 299 (FYCEVLLLDE…EHHTFFRMPE (289 aa)) folds into the FERM domain. The residue at position 304 (Ser304) is a Phosphoserine. The segment at 331–686 (RDLSIQLPRP…IQASRLKTET (356 aa)) is disordered. Over residues 357–376 (AQTQPAESNSISRITANMEN) the composition is skewed to polar residues. Ser389, Ser393, and Ser402 each carry phosphoserine. Residues 418 to 428 (GPQSGLYNSPS) show a composition bias toward polar residues. Low complexity predominate over residues 479 to 489 (RCNTSSGSESE). Composition is skewed to basic and acidic residues over residues 518–527 (VLRRQKEKNQ) and 547–561 (QAKE…KELV). Basic residues predominate over residues 588 to 601 (IRHSHSPRSYRQYR). Residues 648-658 (GSKDSLMEEKP) are compositionally biased toward basic and acidic residues. Over residues 673–686 (TIKTIQASRLKTET) the composition is skewed to polar residues.

In terms of tissue distribution, expressed in many tissues. High levels of expression in brain, liver, thymus and peripheral blood leukocytes and low levels of expression in heart, kidney, testis and colon.

It localises to the cytoplasm. The protein resides in the cytoskeleton. This chain is Band 4.1-like protein 4A, found in Homo sapiens (Human).